The sequence spans 472 residues: Gamma-aminobutyric acid receptor subunit beta-2 (472 aa).

The signal sequence occupies residues 1 to 23 (RVRKKDYFGIWSFPLIIAAVCAQ). Residues 24–239 (SVNDPSNMSL…LSLSFKLKRN (216 aa)) lie on the Extracellular side of the membrane. 2 N-linked (GlcNAc...) asparagine glycosylation sites follow: asparagine 30 and asparagine 102. Tyrosine 119 contributes to the histamine binding site. An intrachain disulfide couples cysteine 158 to cysteine 172. Histamine-binding positions include 178-179 (SY) and threonine 224. Residues tyrosine 179 and threonine 224 each contribute to the 4-aminobutanoate site. Transmembrane regions (helical) follow at residues 240-260 (IGYF…LSWV), 271-290 (ARVA…NTHL), and 309-329 (GCFV…YIFF). The etomidate binding; allosteric effector stretch occupies residues 287-308 (NTHLRETLPKIPYVKAIDMYLM). Residues 330–450 (GRGPQRQKKA…LTDVNAIDRW (121 aa)) lie on the Cytoplasmic side of the membrane. The residue at position 401 (tyrosine 401) is a Phosphotyrosine. A helical transmembrane segment spans residues 451 to 471 (SRIFFPVVFSFFNIVYWLYYV).

Belongs to the ligand-gated ion channel (TC 1.A.9) family. Gamma-aminobutyric acid receptor (TC 1.A.9.5) subfamily. GABRB2 sub-subfamily. As to quaternary structure, heteropentamer, formed by a combination of alpha (GABRA1-6), beta (GABRB1-3), gamma (GABRG1-3), delta (GABRD), epsilon (GABRE), rho (GABRR1-3), pi (GABRP) and theta (GABRQ) chains, each subunit exhibiting distinct physiological and pharmacological properties. Interacts with UBQLN1. May interact with KIF21B. Identified in a complex of 720 kDa composed of LHFPL4, NLGN2, GABRA1, GABRB2, GABRG2 and GABRB3. Post-translationally, glycosylated.

The protein localises to the postsynaptic cell membrane. The protein resides in the cell membrane. Its subcellular location is the cytoplasmic vesicle membrane. It catalyses the reaction chloride(in) = chloride(out). Allosterically activated by benzodiazepines. Allosterically activated by the anesthetic etomidate. Inhibited by the antagonist bicuculline. Potentiated by histamine. Its function is as follows. Beta subunit of the heteropentameric ligand-gated chloride channel gated by gamma-aminobutyric acid (GABA), a major inhibitory neurotransmitter in the brain. GABA-gated chloride channels, also named GABA(A) receptors (GABAAR), consist of five subunits arranged around a central pore and contain GABA active binding site(s) located at the alpha and beta subunit interface(s). When activated by GABA, GABAARs selectively allow the flow of chloride anions across the cell membrane down their electrochemical gradient. Chloride influx into the postsynaptic neuron following GABAAR opening decreases the neuron ability to generate a new action potential, thereby reducing nerve transmission. GABAARs containing alpha-1 and beta-2 or -3 subunits exhibit synaptogenic activity; the gamma-2 subunit being necessary but not sufficient to induce rapid synaptic contacts formation. Extrasynaptic beta-2 receptors contribute to the tonic GABAergic inhibition. Beta-containing GABAARs can simultaneously bind GABA and histamine where histamine binds at the interface of two neighboring beta subunits, which may be involved in the regulation of sleep and wakefulness. In Bos taurus (Bovine), this protein is Gamma-aminobutyric acid receptor subunit beta-2 (GABRB2).